We begin with the raw amino-acid sequence, 358 residues long: Ferredoxin--NADP reductase (358 aa).

FAD is bound by residues Asp38, Gln46, Tyr51, Val91, Phe126, Asp301, and Thr341.

Belongs to the ferredoxin--NADP reductase type 2 family. In terms of assembly, homodimer. It depends on FAD as a cofactor.

It catalyses the reaction 2 reduced [2Fe-2S]-[ferredoxin] + NADP(+) + H(+) = 2 oxidized [2Fe-2S]-[ferredoxin] + NADPH. The sequence is that of Ferredoxin--NADP reductase from Paracidovorax citrulli (strain AAC00-1) (Acidovorax citrulli).